The chain runs to 304 residues: Bifunctional protein FolD (304 aa).

NADP(+) is bound by residues 170–172 (GRS), S195, and I236.

It belongs to the tetrahydrofolate dehydrogenase/cyclohydrolase family. In terms of assembly, homodimer.

The enzyme catalyses (6R)-5,10-methylene-5,6,7,8-tetrahydrofolate + NADP(+) = (6R)-5,10-methenyltetrahydrofolate + NADPH. It carries out the reaction (6R)-5,10-methenyltetrahydrofolate + H2O = (6R)-10-formyltetrahydrofolate + H(+). It participates in one-carbon metabolism; tetrahydrofolate interconversion. Catalyzes the oxidation of 5,10-methylenetetrahydrofolate to 5,10-methenyltetrahydrofolate and then the hydrolysis of 5,10-methenyltetrahydrofolate to 10-formyltetrahydrofolate. The sequence is that of Bifunctional protein FolD from Anaplasma phagocytophilum (strain HZ).